The chain runs to 103 residues: Large ribosomal subunit protein bL21 (103 aa).

The protein belongs to the bacterial ribosomal protein bL21 family. As to quaternary structure, part of the 50S ribosomal subunit. Contacts protein L20.

Functionally, this protein binds to 23S rRNA in the presence of protein L20. The polypeptide is Large ribosomal subunit protein bL21 (Thioalkalivibrio sulfidiphilus (strain HL-EbGR7)).